We begin with the raw amino-acid sequence, 396 residues long: Obg-like ATPase 1 (396 aa).

In terms of domain architecture, OBG-type G spans 23–283 (LKIGIVGLPN…LSAEERQKYL (261 aa)). Residue 32–37 (NVGKST) participates in ATP binding. Residues Ser36 and Thr56 each contribute to the Mg(2+) site. Residue Leu231 participates in ATP binding. Positions 267-274 (LELKLQEL) match the Nuclear export signal motif. Lys294 is modified (N6-acetyllysine). A TGS domain is found at 304 to 387 (QLEYFFTAGP…EDGDIIFFKF (84 aa)).

Belongs to the TRAFAC class OBG-HflX-like GTPase superfamily. OBG GTPase family. YchF/OLA1 subfamily. Monomer. Mg(2+) is required as a cofactor.

Its subcellular location is the cytoplasm. It localises to the nucleus. It is found in the nucleolus. In terms of biological role, hydrolyzes ATP, and can also hydrolyze GTP with lower efficiency. Has lower affinity for GTP. The polypeptide is Obg-like ATPase 1 (Pongo abelii (Sumatran orangutan)).